We begin with the raw amino-acid sequence, 405 residues long: Replication factor C large subunit (405 aa).

An ATP-binding site is contributed by G47 to T54.

Belongs to the activator 1 small subunits family. RfcL subfamily. Heteromultimer composed of small subunits (RfcS) and large subunits (RfcL).

In terms of biological role, part of the RFC clamp loader complex which loads the PCNA sliding clamp onto DNA. In Saccharolobus islandicus (strain M.16.4 / Kamchatka #3) (Sulfolobus islandicus), this protein is Replication factor C large subunit.